The sequence spans 381 residues: Alkanesulfonate monooxygenase (381 aa).

It belongs to the SsuD family. As to quaternary structure, homotetramer.

The catalysed reaction is an alkanesulfonate + FMNH2 + O2 = an aldehyde + FMN + sulfite + H2O + 2 H(+). Functionally, catalyzes the desulfonation of aliphatic sulfonates. This Escherichia coli O7:K1 (strain IAI39 / ExPEC) protein is Alkanesulfonate monooxygenase.